Here is a 151-residue protein sequence, read N- to C-terminus: Transcriptional regulator MraZ (151 aa).

2 SpoVT-AbrB domains span residues 5-52 (ANAI…PLSE) and 81-124 (AVDL…DEDA).

The protein belongs to the MraZ family. Forms oligomers.

The protein localises to the cytoplasm. It is found in the nucleoid. The chain is Transcriptional regulator MraZ from Pseudomonas syringae pv. syringae (strain B728a).